Here is a 46-residue protein sequence, read N- to C-terminus: Antimicrobial peptide eNAP-1 (46 aa).

Cystine bridges form between cysteine 4–cysteine 16 and cysteine 10–cysteine 26.

This sequence belongs to the granulin family.

Its subcellular location is the secreted. Its function is as follows. Has antimicrobial activity against Gram-negative and Gram-positive bacteria. This Equus caballus (Horse) protein is Antimicrobial peptide eNAP-1.